The chain runs to 506 residues: Maturase K (506 aa).

This sequence belongs to the intron maturase 2 family. MatK subfamily.

The protein localises to the plastid. It is found in the chloroplast. In terms of biological role, usually encoded in the trnK tRNA gene intron. Probably assists in splicing its own and other chloroplast group II introns. In Trifolium repens (Creeping white clover), this protein is Maturase K.